Here is a 280-residue protein sequence, read N- to C-terminus: Acetyl-coenzyme A carboxylase carboxyl transferase subunit beta (280 aa).

A CoA carboxyltransferase N-terminal domain is found at 28-280; it reads LFLACPYCGA…IVRLHTAEAE (253 aa). Residues Cys-32, Cys-35, Cys-50, and Cys-53 each contribute to the Zn(2+) site. A C4-type zinc finger spans residues 32 to 53; the sequence is CPYCGAQMYNKQLGKYRVCAKC.

It belongs to the AccD/PCCB family. In terms of assembly, acetyl-CoA carboxylase is a heterohexamer composed of biotin carboxyl carrier protein (AccB), biotin carboxylase (AccC) and two subunits each of ACCase subunit alpha (AccA) and ACCase subunit beta (AccD). Zn(2+) serves as cofactor.

The protein localises to the cytoplasm. The catalysed reaction is N(6)-carboxybiotinyl-L-lysyl-[protein] + acetyl-CoA = N(6)-biotinyl-L-lysyl-[protein] + malonyl-CoA. It participates in lipid metabolism; malonyl-CoA biosynthesis; malonyl-CoA from acetyl-CoA: step 1/1. Its function is as follows. Component of the acetyl coenzyme A carboxylase (ACC) complex. Biotin carboxylase (BC) catalyzes the carboxylation of biotin on its carrier protein (BCCP) and then the CO(2) group is transferred by the transcarboxylase to acetyl-CoA to form malonyl-CoA. The polypeptide is Acetyl-coenzyme A carboxylase carboxyl transferase subunit beta (Leuconostoc mesenteroides subsp. mesenteroides (strain ATCC 8293 / DSM 20343 / BCRC 11652 / CCM 1803 / JCM 6124 / NCDO 523 / NBRC 100496 / NCIMB 8023 / NCTC 12954 / NRRL B-1118 / 37Y)).